We begin with the raw amino-acid sequence, 126 residues long: MSPQTFCILLIFSLSLEKTSLIVWNIFVNLRLGVFLLLVRIFSSVFLSVTFLGLFRTLLPVGRICFLLLLKADRFLTSSRDPYSRFLPSSRIPKKSFHSPCTDFSILPMSIIVPFSSEYLLVHVQQ.

The next 2 helical transmembrane spans lie at 21–43 (LIVWNIFVNLRLGVFLLLVRIFS) and 48–70 (SVTFLGLFRTLLPVGRICFLLLL).

It localises to the membrane. This is an uncharacterized protein from Saccharomyces cerevisiae (strain ATCC 204508 / S288c) (Baker's yeast).